Consider the following 130-residue polypeptide: Cytochrome c-type biogenesis protein CcmE (130 aa).

The Cytoplasmic segment spans residues 1–7; the sequence is MKKKHKR. A helical; Signal-anchor for type II membrane protein membrane pass occupies residues 8–28; that stretch reads LLITSGIFCFLSCAVFFILTT. The Extracellular portion of the chain corresponds to 29–130; sequence LKENISFFYT…DENYKPKVLK (102 aa). Heme contacts are provided by His-120 and Tyr-124.

This sequence belongs to the CcmE/CycJ family.

It is found in the cell membrane. In terms of biological role, heme chaperone required for the biogenesis of c-type cytochromes. Transiently binds heme delivered by CcmC and transfers the heme to apo-cytochromes in a process facilitated by CcmF and CcmH. This Wolbachia pipientis subsp. Culex pipiens (strain wPip) protein is Cytochrome c-type biogenesis protein CcmE.